Here is a 352-residue protein sequence, read N- to C-terminus: B1 bradykinin receptor (352 aa).

Topologically, residues 1-41 (MASWPPLELQSSNQSQLFPQNATACDNAPEAWDLLHRVLPT) are extracellular. Residues asparagine 13 and asparagine 21 are each glycosylated (N-linked (GlcNAc...) asparagine). The chain crosses the membrane as a helical span at residues 42-62 (FIISICSFGLLGNLFVLLVFL). Over 63–72 (LPRRRLNVAE) the chain is Cytoplasmic. Residues 73-93 (IYLANLAASDLVFVLGLPFWA) form a helical membrane-spanning segment. Residues 94–110 (ENIWNQFNWPFGALLCR) are Extracellular-facing. The cysteines at positions 109 and 188 are disulfide-linked. A helical membrane pass occupies residues 111-131 (GINGVIKANLFISIFLVVAIS). Residues 132 to 153 (QDRYCLLVHPMASRRRQRRRQA) lie on the Cytoplasmic side of the membrane. The chain crosses the membrane as a helical span at residues 154 to 174 (RVTCVLIWVVGGLLSIPTFLL). At 175–206 (RSIQAVPDLNITACILLLPHEAWHFARIVELN) the chain is on the extracellular side. N-linked (GlcNAc...) asparagine glycosylation occurs at asparagine 184. A helical membrane pass occupies residues 207-227 (ILAFLLPLAAIVFFNYHILAS). Topologically, residues 228–250 (LRGREEVSRTRCGGRKDSKTTAL) are cytoplasmic. The helical transmembrane segment at 251–271 (ILTLVVAFLVCWAPYHFFAFL) threads the bilayer. The Extracellular segment spans residues 272–294 (EFLFQVQAIRSCFWEDFIDLGLQ). The chain crosses the membrane as a helical span at residues 295–315 (LANFLAFTNSSLNPVIYVFVG). Residues 316-352 (RLFRTKVWELYKQCTPKSLAPISSSHRKEIFQLFWRN) lie on the Cytoplasmic side of the membrane. Residue cysteine 329 is the site of S-palmitoyl cysteine attachment.

The protein belongs to the G-protein coupled receptor 1 family. Bradykinin receptor subfamily. BDKRB1 sub-subfamily.

Its subcellular location is the cell membrane. This is a receptor for bradykinin. Could be a factor in chronic pain and inflammation. This is B1 bradykinin receptor (BDKRB1) from Chlorocebus pygerythrus (Vervet monkey).